The chain runs to 166 residues: Crossover junction endodeoxyribonuclease RuvC (166 aa).

Catalysis depends on residues aspartate 7, glutamate 67, and aspartate 139. The Mg(2+) site is built by aspartate 7, glutamate 67, and aspartate 139.

The protein belongs to the RuvC family. In terms of assembly, homodimer which binds Holliday junction (HJ) DNA. The HJ becomes 2-fold symmetrical on binding to RuvC with unstacked arms; it has a different conformation from HJ DNA in complex with RuvA. In the full resolvosome a probable DNA-RuvA(4)-RuvB(12)-RuvC(2) complex forms which resolves the HJ. It depends on Mg(2+) as a cofactor.

The protein resides in the cytoplasm. It catalyses the reaction Endonucleolytic cleavage at a junction such as a reciprocal single-stranded crossover between two homologous DNA duplexes (Holliday junction).. Its function is as follows. The RuvA-RuvB-RuvC complex processes Holliday junction (HJ) DNA during genetic recombination and DNA repair. Endonuclease that resolves HJ intermediates. Cleaves cruciform DNA by making single-stranded nicks across the HJ at symmetrical positions within the homologous arms, yielding a 5'-phosphate and a 3'-hydroxyl group; requires a central core of homology in the junction. The consensus cleavage sequence is 5'-(A/T)TT(C/G)-3'. Cleavage occurs on the 3'-side of the TT dinucleotide at the point of strand exchange. HJ branch migration catalyzed by RuvA-RuvB allows RuvC to scan DNA until it finds its consensus sequence, where it cleaves and resolves the cruciform DNA. The chain is Crossover junction endodeoxyribonuclease RuvC from Paramagnetospirillum magneticum (strain ATCC 700264 / AMB-1) (Magnetospirillum magneticum).